Reading from the N-terminus, the 485-residue chain is Velvet complex subunit B (485 aa).

The Velvet domain occupies 33–459 (GRKHYSLEVV…GNQGQKLPLA (427 aa)). The tract at residues 107–353 (VLHPSSVDRH…PPPPRHTYTR (247 aa)) is disordered. Composition is skewed to polar residues over residues 134–155 (APQS…TLSQ), 234–243 (RSPSSSTSDH), 267–304 (SISS…SPHS), and 326–341 (THSQ…QHVS).

Belongs to the velvet family. VelB subfamily. Component of the heterotrimeric velvet complex composed of laeA, veA and velB; VeA acting as a bridging protein between laeA and velB. Forms a heterodimeric complex with vosA; the formation of the velB-vosA complex is light-dependent.

Its subcellular location is the nucleus. It is found in the cytoplasm. In terms of biological role, component of the velvet transcription factor complex that controls sexual/asexual developmental ratio in response to light, promoting sexual development in the darkness while stimulating asexual sporulation under illumination. The velvet complex acts as a global regulator for secondary metabolite gene expression. Component of the velB-VosA heterodimeric complex that plays a dual role in activating genes associated with spore maturation and repressing certain development-associated genes. The velB-VosA complex binds DNA through the DNA-binding domain of vosA that recognizes an 11-nucleotide consensus sequence 5'-CTGGCCGCGGC-3' consisting of two motifs in the promoters of key developmental regulatory genes. This is Velvet complex subunit B from Laccaria bicolor (strain S238N-H82 / ATCC MYA-4686) (Bicoloured deceiver).